A 544-amino-acid polypeptide reads, in one-letter code: Shootin-1 (544 aa).

3 coiled-coil regions span residues 17–100 (SNQV…LKRK), 141–184 (IVIT…EKHD), and 259–349 (EALQ…QVSN). Positions 343 to 544 (KLQQVSNPPT…TTTICTEQLS (202 aa)) are disordered. The segment covering 352-371 (TAAPAPPPPPPPPPPPPPPS) has biased composition (pro residues). Positions 372-383 (SSSSNPLSSLLS) are enriched in low complexity. A compositionally biased stretch (basic and acidic residues) spans 397–412 (LVEKDSSEKSPEKDVR). The span at 469 to 479 (SSSPGPRPPSP) shows a compositional bias: pro residues. The stretch at 480 to 504 (SEKSELEKALQRRREAVKSAKNNTN) forms a coiled coil. Residues 481–497 (EKSELEKALQRRREAVK) are compositionally biased toward basic and acidic residues. Positions 499 to 544 (AKNNTNPSSVVDLTQIKQTRSEPGQNTGDQETLRHTTTTICTEQLS) are enriched in polar residues.

This sequence belongs to the shootin family.

The protein localises to the perikaryon. Its subcellular location is the cell projection. The protein resides in the axon. It is found in the growth cone. It localises to the cytoplasm. The protein localises to the cytoskeleton. Its subcellular location is the filopodium. The protein resides in the lamellipodium. In terms of biological role, involved in the generation of internal asymmetric signals required for neuronal polarization and neurite outgrowth. In Danio rerio (Zebrafish), this protein is Shootin-1.